Reading from the N-terminus, the 249-residue chain is MADS-box transcription factor 17 (249 aa).

The MADS-box domain occupies 1 to 61 (MGRGRVELKR…GKLYEFGSAG (61 aa)). Residues 88 to 178 (HQSWYQEMSR…KNKLEAEADS (91 aa)) form the K-box domain. Positions 228–249 (ANPRSNGGGGDQNNNFVMGWPL) are disordered.

May interact with the K-box of MADS6. Expressed in the floral meristem, lodicule, palea, lemma, receptacle, empty glume, stamen, pistil, and ovule.

The protein resides in the nucleus. In terms of biological role, probable transcription factor. Plays minor but redundant roles with MADS6 in floral development. The sequence is that of MADS-box transcription factor 17 (MADS17) from Oryza sativa subsp. japonica (Rice).